The sequence spans 300 residues: NAD kinase (300 aa).

Residue D75 is the Proton acceptor of the active site. Residues 75 to 76, 149 to 150, R177, D179, 190 to 195, A214, and Q248 contribute to the NAD(+) site; these read DG, ND, and TAYALS.

It belongs to the NAD kinase family. It depends on a divalent metal cation as a cofactor.

Its subcellular location is the cytoplasm. It catalyses the reaction NAD(+) + ATP = ADP + NADP(+) + H(+). Involved in the regulation of the intracellular balance of NAD and NADP, and is a key enzyme in the biosynthesis of NADP. Catalyzes specifically the phosphorylation on 2'-hydroxyl of the adenosine moiety of NAD to yield NADP. This Burkholderia pseudomallei (strain K96243) protein is NAD kinase.